The following is a 122-amino-acid chain: Small ribosomal subunit protein uS13 (122 aa).

Residues 99–122 (RGQRTHTNARTRKGPAKAIAGKKK) are disordered.

It belongs to the universal ribosomal protein uS13 family. As to quaternary structure, part of the 30S ribosomal subunit. Forms a loose heterodimer with protein S19. Forms two bridges to the 50S subunit in the 70S ribosome.

Its function is as follows. Located at the top of the head of the 30S subunit, it contacts several helices of the 16S rRNA. In the 70S ribosome it contacts the 23S rRNA (bridge B1a) and protein L5 of the 50S subunit (bridge B1b), connecting the 2 subunits; these bridges are implicated in subunit movement. Contacts the tRNAs in the A and P-sites. This chain is Small ribosomal subunit protein uS13, found in Rhizobium meliloti (strain 1021) (Ensifer meliloti).